The chain runs to 357 residues: UDP-N-acetylglucosamine 2-epimerase homolog (357 aa).

It belongs to the UDP-N-acetylglucosamine 2-epimerase family.

This Methanococcus maripaludis (strain DSM 14266 / JCM 13030 / NBRC 101832 / S2 / LL) protein is UDP-N-acetylglucosamine 2-epimerase homolog.